A 152-amino-acid polypeptide reads, in one-letter code: SsrA-binding protein (152 aa).

Positions 122–152 (KGKKNHDKRETEAARDWQRDKARLMKGDRGD) are disordered. Positions 128–152 (DKRETEAARDWQRDKARLMKGDRGD) are enriched in basic and acidic residues.

The protein belongs to the SmpB family.

It is found in the cytoplasm. Required for rescue of stalled ribosomes mediated by trans-translation. Binds to transfer-messenger RNA (tmRNA), required for stable association of tmRNA with ribosomes. tmRNA and SmpB together mimic tRNA shape, replacing the anticodon stem-loop with SmpB. tmRNA is encoded by the ssrA gene; the 2 termini fold to resemble tRNA(Ala) and it encodes a 'tag peptide', a short internal open reading frame. During trans-translation Ala-aminoacylated tmRNA acts like a tRNA, entering the A-site of stalled ribosomes, displacing the stalled mRNA. The ribosome then switches to translate the ORF on the tmRNA; the nascent peptide is terminated with the 'tag peptide' encoded by the tmRNA and targeted for degradation. The ribosome is freed to recommence translation, which seems to be the essential function of trans-translation. This Caulobacter sp. (strain K31) protein is SsrA-binding protein.